A 253-amino-acid polypeptide reads, in one-letter code: MRILLSNDDGVHAPGIQTLAKALREFADVQVVAPDRNRSGASNSLTLESSLRTFTFDNGDIAVQMGTPTDCVYLGVNALMRPRPDIVVSGINAGPNLGDDVIYSGTVAAAMEGRHLGFPALAVSLNGYQHYDTAAAVTCALLRGLSREPLRTGRILNVNVPDLPLAQVKGIRVTRCGSRHPADKVIPQEDPRGNTLYWIGPPGDKYDAGPDTDFAAVDEGYVSVTPLHVDLTAHSAHDVVSDWLDSVGVGTQW.

The a divalent metal cation site is built by aspartate 8, aspartate 9, serine 39, and asparagine 92.

This sequence belongs to the SurE nucleotidase family. It depends on a divalent metal cation as a cofactor.

Its subcellular location is the cytoplasm. The catalysed reaction is a ribonucleoside 5'-phosphate + H2O = a ribonucleoside + phosphate. The enzyme catalyses a ribonucleoside 3'-phosphate + H2O = a ribonucleoside + phosphate. It carries out the reaction [phosphate](n) + H2O = [phosphate](n-1) + phosphate + H(+). Functionally, nucleotidase with a broad substrate specificity as it can dephosphorylate various ribo- and deoxyribonucleoside 5'-monophosphates and ribonucleoside 3'-monophosphates with highest affinity to 3'-AMP. Also hydrolyzes polyphosphate (exopolyphosphatase activity) with the preference for short-chain-length substrates (P20-25). Might be involved in the regulation of dNTP and NTP pools, and in the turnover of 3'-mononucleotides produced by numerous intracellular RNases (T1, T2, and F) during the degradation of various RNAs. The protein is 5'/3'-nucleotidase SurE of Salmonella typhimurium (strain LT2 / SGSC1412 / ATCC 700720).